The chain runs to 309 residues: Probable cell wall protein PGA50 (309 aa).

A signal peptide spans 1–17 (MKLNLLLLLFIVELVAA). N67, N115, N248, N267, and N277 each carry an N-linked (GlcNAc...) asparagine glycan. The interval 241–281 (STTTFSSNGTSSGTTNGDTRAETKSSNSTQTSSSDKNSSQI) is disordered. S286 carries the GPI-anchor amidated serine lipid modification. The propeptide at 287-309 (TGVANFVASFGMGTLLLFVLSLC) is removed in mature form.

Belongs to the IHD1 family. In terms of processing, the GPI-anchor is attached to the protein in the endoplasmic reticulum and serves to target the protein to the cell surface. There, the glucosamine-inositol phospholipid moiety is cleaved off and the GPI-modified mannoprotein is covalently attached via its lipidless GPI glycan remnant to the 1,6-beta-glucan of the outer cell wall layer.

The protein resides in the secreted. It is found in the cell wall. It localises to the membrane. Its function is as follows. Probable GPI-anchored cell wall protein that may be involved in cell wall organization, hyphal growth, as well as in virulence. This is Probable cell wall protein PGA50 (PGA50) from Candida albicans (strain SC5314 / ATCC MYA-2876) (Yeast).